We begin with the raw amino-acid sequence, 635 residues long: Probable extracellular metalloproteinase 1 (635 aa).

The N-terminal stretch at 1-19 (MHGLLLAAGLLSLPLHVLA) is a signal peptide. The propeptide occupies 20–246 (HPQPSTSTSL…VHNVVDYVAH (227 aa)). A glycan (N-linked (GlcNAc...) asparagine) is linked at Asn287. His430 lines the Zn(2+) pocket. Glu431 is an active-site residue. Position 434 (His434) interacts with Zn(2+). N-linked (GlcNAc...) asparagine glycosylation is found at Asn475, Asn594, and Asn623.

Belongs to the peptidase M36 family. It depends on Zn(2+) as a cofactor.

The protein localises to the secreted. Its function is as follows. Secreted metalloproteinase probably acting as a virulence factor. In Trichophyton verrucosum (strain HKI 0517), this protein is Probable extracellular metalloproteinase 1 (MEP1).